We begin with the raw amino-acid sequence, 537 residues long: uncharacterized protein (537 aa).

Belongs to the RuBisCO large chain family. Type IV subfamily.

Its function is as follows. Unknown. Probably does not have RuBisCO activity. This is an uncharacterized protein from Symbiodinium sp. (Dinoflagellate).